Reading from the N-terminus, the 240-residue chain is MGNAPQRPILITGGGRRIGLALAHHFLTLRQPVIVSYRNEYPSIEGLRQAGATCIQADFSTDEGILRFAETVKSNTRGLRAIIHNASAWQAEKPGTPLSETLACMMQIHVHAPYLLNHALEELLRGHGHAAGDIIHFTDYVVERGSDKHIAYAASKAALDNMTRSFARKLAPEVKVNAIAPSLILFNEEDDAEYRQKALNKSLMKIVPGEKEVIDLIDYLLTSCYVTGRSFGVDGGRPLN.

Tyrosine 152 serves as the catalytic Proton acceptor.

The protein belongs to the short-chain dehydrogenases/reductases (SDR) family. FolM subfamily.

It carries out the reaction (6S)-5,6,7,8-tetrahydrofolate + NADP(+) = 7,8-dihydrofolate + NADPH + H(+). It catalyses the reaction 7,8-dihydromonapterin + NADPH + H(+) = 5,6,7,8-tetrahydromonapterin + NADP(+). Catalyzes the reduction of dihydromonapterin to tetrahydromonapterin. Also has lower activity with dihydrofolate. The sequence is that of Dihydromonapterin reductase (folM) from Enterobacter sp. (strain 638).